The sequence spans 1266 residues: 5-oxoprolinase 1 (1266 aa).

The protein belongs to the oxoprolinase family. In terms of tissue distribution, expressed in roots, stems, leaves, flowers and siliques.

Its subcellular location is the cytoplasm. The catalysed reaction is 5-oxo-L-proline + ATP + 2 H2O = L-glutamate + ADP + phosphate + H(+). Catalyzes the cleavage of 5-oxo-L-proline to form L-glutamate coupled to the hydrolysis of ATP to ADP and inorganic phosphate. Acts in the glutathione degradation pathway. This chain is 5-oxoprolinase 1, found in Arabidopsis thaliana (Mouse-ear cress).